The following is a 109-amino-acid chain: uncharacterized protein (109 aa).

A signal peptide spans 1–21; that stretch reads MEKSICTSVLVLGLFISSAIG.

Prismatic layer of shell (at protein level). Expressed primarily in the mantle with highest level in the mantle edge and lower level in the mantle pallium.

Its subcellular location is the secreted. This is an uncharacterized protein from Margaritifera margaritifera (Freshwater pearl mussel).